Reading from the N-terminus, the 294-residue chain is Zinc finger protein CONSTANS-LIKE 3 (294 aa).

Zn(2+)-binding residues include Cys-8, Cys-11, Cys-31, His-36, Cys-51, Cys-54, Cys-74, and His-79. Residues 8 to 50 (CDSCKSTAATLFCRADAAFLCGDCDGKIHTANKLASRHERVWL) form a B box-type 1; atypical zinc finger. Residues 51 to 93 (CEVCEQAPAHVTCKADAAALCVTCDRDIHSANPLSRRHERVPI) form a B box-type 2; atypical zinc finger. Residues 229–271 (REARVLRYREKRKNRKFEKTIRYASRKAYAEMRPRIKGRFAKR) enclose the CCT domain.

This sequence belongs to the CONSTANS family.

The protein localises to the nucleus. This is Zinc finger protein CONSTANS-LIKE 3 (COL3) from Arabidopsis thaliana (Mouse-ear cress).